The primary structure comprises 315 residues: C1GALT1-specific chaperone 1-like protein (315 aa).

Topologically, residues 1 to 8 (MVSASGTS) are cytoplasmic. Residues 9-29 (FFKGMLLGSISWVLITMFGQI) form a helical; Signal-anchor for type II membrane protein membrane-spanning segment. The Lumenal portion of the chain corresponds to 30-315 (HIRHRGQTQD…FLPPVGSEND (286 aa)). Residues Asn55 and Asn301 are each glycosylated (N-linked (GlcNAc...) asparagine).

The protein belongs to the glycosyltransferase 31 family. Beta3-Gal-T subfamily.

It localises to the membrane. The chain is C1GALT1-specific chaperone 1-like protein from Homo sapiens (Human).